A 212-amino-acid chain; its full sequence is Ribonuclease HII (212 aa).

An RNase H type-2 domain is found at 19–212 (CIIVGVDEVG…SKISYMFKNS (194 aa)). The a divalent metal cation site is built by aspartate 25, glutamate 26, and aspartate 120.

It belongs to the RNase HII family. Mn(2+) serves as cofactor. The cofactor is Mg(2+).

It localises to the cytoplasm. It catalyses the reaction Endonucleolytic cleavage to 5'-phosphomonoester.. Endonuclease that specifically degrades the RNA of RNA-DNA hybrids. This is Ribonuclease HII from Ehrlichia ruminantium (strain Welgevonden).